The chain runs to 99 residues: uncharacterized protein (99 aa).

A helical transmembrane segment spans residues 74-90 (FLSLPLGHSYLFLFCFW).

Its subcellular location is the membrane. This is an uncharacterized protein from Saccharomyces cerevisiae (strain ATCC 204508 / S288c) (Baker's yeast).